The primary structure comprises 966 residues: SH3 domain-binding protein 4 (966 aa).

Positions 57-116 (GAAREVVAIKDCCPSSFTTLKFSKGDRLYVLDSSGAEWWYAHNNTEMGYIPAAYVEPINY) constitute an SH3 1 domain. A ZU5 domain is found at 322-457 (TNIVCRLDSS…LEPCMYVCVV (136 aa)). One can recognise an SH3 2 domain in the interval 657–727 (NNLKFGKLIK…HAKNVLVVGK (71 aa)).

In terms of assembly, homodimer or homooligomer.

The protein localises to the membrane. It is found in the clathrin-coated pit. The protein resides in the cytoplasmic vesicle. It localises to the clathrin-coated vesicle. Its subcellular location is the nucleus. Possible role in regulating endocytosis of the transferrin receptor at the plasma membrane. Alternatively, may function as a negative regulator of the amino acid-induced TOR signaling by inhibiting the formation of active Rag GTPase complexes. Preferentially binds inactive Rag GTPase complexes and prevents their interaction with the mTORC1 complex inhibiting its relocalization to lysosomes and its activation. Thereby, may indirectly regulate cell growth, proliferation and autophagy. In Seriola quinqueradiata (Five-ray yellowtail), this protein is SH3 domain-binding protein 4 (sh3bp4).